Consider the following 377-residue polypeptide: Prostaglandin E synthase 2 (377 aa).

The Lumenal segment spans residues 1–57 (MDPAARVVRALWPGGCALAWRLGGRPQPLLPTQSRAGFAGAAGGPSPVAAARKGSPR). The chain crosses the membrane as a helical span at residues 58–74 (LLGAAALALGGALGLYH). Residues 75–377 (TARWHLRAQD…RAITEASPAH (303 aa)) are Cytoplasmic-facing. One can recognise a Glutaredoxin domain in the interval 90–193 (SAAQLSLSSR…EIITYYPAMK (104 aa)). Position 95 is a phosphoserine (S95). Residues V148 and 164 to 165 (DS) contribute to the glutathione site. Residues 263–377 (YIVREGKFGA…RAITEASPAH (115 aa)) form the GST C-terminal domain.

This sequence belongs to the GST superfamily. As to quaternary structure, homodimer. May interact with CEBPB. Interacts with EXOSC10. In terms of processing, synthesized as a Golgi membrane-associated protein, and the proteolytic removal of the N-terminal hydrophobic domain leads to the formation of a mature cytosolic enzyme. In terms of tissue distribution, widely expressed. Expressed in the heart, including apex, inter-ventricular septum, both atria and ventricles, but not in the aorta. Also expressed in fetal heart. Detected in various regions of the brain: cerebellum; occipital, frontal and parietal lobes. Also expressed in the lymph nodes, skeletal muscle, kidney and trachea, but not in the thymus or lung. Overexpressed in colorectal cancer.

The protein localises to the golgi apparatus membrane. It is found in the cytoplasm. The protein resides in the perinuclear region. It carries out the reaction prostaglandin H2 = prostaglandin E2. The catalysed reaction is prostaglandin H2 = (12S)-hydroxy-(5Z,8E,10E)-heptadecatrienoate + malonaldehyde. Its pathway is lipid metabolism; prostaglandin biosynthesis. Isomerase activity is increased by sulfhydril compounds. Dithiothreitol (DTT) is most effective, followed by dihydrolipoic acid, glutathione (GSH) and 2-mercaptoethanol. Functionally, isomerase that catalyzes the conversion of PGH2 into the more stable prostaglandin E2 (PGE2) (in vitro). The biological function and the GSH-dependent property of PTGES2 is still under debate. In vivo, PTGES2 could form a complex with GSH and heme and would not participate in PGE2 synthesis but would catalyze the degradation of prostaglandin E2 H2 (PGH2) to 12(S)-hydroxy-5(Z),8(E),10(E)-heptadecatrienoic acid (HHT) and malondialdehyde (MDA). This is Prostaglandin E synthase 2 (PTGES2) from Homo sapiens (Human).